The following is a 315-amino-acid chain: Adenine deaminase (315 aa).

Zn(2+)-binding residues include His-14, His-16, and His-194. Residue Glu-197 is the Proton donor of the active site. Residue Asp-275 participates in Zn(2+) binding. Residue Asp-276 participates in substrate binding.

This sequence belongs to the metallo-dependent hydrolases superfamily. Adenosine and AMP deaminases family. Adenine deaminase type 2 subfamily. Requires Zn(2+) as cofactor.

The catalysed reaction is adenine + H2O + H(+) = hypoxanthine + NH4(+). Catalyzes the hydrolytic deamination of adenine to hypoxanthine. Plays an important role in the purine salvage pathway and in nitrogen catabolism. The sequence is that of Adenine deaminase from Pseudomonas putida (strain W619).